We begin with the raw amino-acid sequence, 405 residues long: Riboflavin biosynthesis protein RibBA (405 aa).

Residues 1-205 are DHBP synthase; it reads MEQIKLDSIA…IKDLIEYRLT (205 aa). D-ribulose 5-phosphate-binding positions include 30–31, D35, 144–148, and E168; these read RE and RVGHT. Position 31 (E31) interacts with Mg(2+). H147 lines the Mg(2+) pocket. The GTP cyclohydrolase II stretch occupies residues 206–405; sequence HESLVKREIG…KMGHTILKKD (200 aa). 256-260 lines the GTP pocket; the sequence is RVHSS. Zn(2+) is bound by residues C261, C272, and C274. Residues Q277, 299–301, and T321 contribute to the GTP site; that span reads EGR. D333 serves as the catalytic Proton acceptor; for GTP cyclohydrolase activity. The Nucleophile; for GTP cyclohydrolase activity role is filled by R335. Positions 356 and 361 each coordinate GTP.

In the N-terminal section; belongs to the DHBP synthase family. It in the C-terminal section; belongs to the GTP cyclohydrolase II family. Mg(2+) is required as a cofactor. Mn(2+) serves as cofactor. It depends on Zn(2+) as a cofactor.

The enzyme catalyses D-ribulose 5-phosphate = (2S)-2-hydroxy-3-oxobutyl phosphate + formate + H(+). It catalyses the reaction GTP + 4 H2O = 2,5-diamino-6-hydroxy-4-(5-phosphoribosylamino)-pyrimidine + formate + 2 phosphate + 3 H(+). It participates in cofactor biosynthesis; riboflavin biosynthesis; 2-hydroxy-3-oxobutyl phosphate from D-ribulose 5-phosphate: step 1/1. The protein operates within cofactor biosynthesis; riboflavin biosynthesis; 5-amino-6-(D-ribitylamino)uracil from GTP: step 1/4. Functionally, catalyzes the conversion of D-ribulose 5-phosphate to formate and 3,4-dihydroxy-2-butanone 4-phosphate. Its function is as follows. Catalyzes the conversion of GTP to 2,5-diamino-6-ribosylamino-4(3H)-pyrimidinone 5'-phosphate (DARP), formate and pyrophosphate. This chain is Riboflavin biosynthesis protein RibBA, found in Cytophaga hutchinsonii (strain ATCC 33406 / DSM 1761 / CIP 103989 / NBRC 15051 / NCIMB 9469 / D465).